Reading from the N-terminus, the 296-residue chain is MKIIVPATSANLGAGFDSIGIAVNLYLTVEVLEESNDWKIDHDLGNNIPTDEKNLLLTTLSAVLKAKNSSLSAKYHLKMTSEVPLARGLGSSSSVIIAGIELANQLAKLNLTTEEKLELACEIEGHPDNVAPALLGNLVIASTVADKTNYVSSDFPSCKLLAFVPDYELKTVESRKVLPKELAYKEAVAASSIANVLTASLLTKNLKVAGQMIESDHFHENYRASLVPELKILREIGHEFGAYGTYLSGAGPTVMLLLPDDKLNLLTEKINEQNLSGQLYSLEVDSNGLQVKESVL.

Position 84 to 94 (84 to 94 (PLARGLGSSSS)) interacts with ATP.

Belongs to the GHMP kinase family. Homoserine kinase subfamily.

It is found in the cytoplasm. It catalyses the reaction L-homoserine + ATP = O-phospho-L-homoserine + ADP + H(+). Its pathway is amino-acid biosynthesis; L-threonine biosynthesis; L-threonine from L-aspartate: step 4/5. Catalyzes the ATP-dependent phosphorylation of L-homoserine to L-homoserine phosphate. This chain is Homoserine kinase, found in Lactococcus lactis subsp. lactis (strain IL1403) (Streptococcus lactis).